A 189-amino-acid chain; its full sequence is Large ribosomal subunit protein bL9 (189 aa).

It belongs to the bacterial ribosomal protein bL9 family.

Its function is as follows. Binds to the 23S rRNA. The chain is Large ribosomal subunit protein bL9 from Brucella ovis (strain ATCC 25840 / 63/290 / NCTC 10512).